Reading from the N-terminus, the 473-residue chain is Photosystem II CP43 reaction center protein (473 aa).

A propeptide spanning residues 1-14 (MKTLYSLRRFYPVE) is cleaved from the precursor. Position 15 is an N-acetylthreonine (Thr15). The residue at position 15 (Thr15) is a Phosphothreonine. 5 helical membrane-spanning segments follow: residues 69 to 93 (LFEVAHFVPEKPMYEQGLILLPHLA), 134 to 155 (LLGPETLEESFPFFGYVWKDRN), 178 to 200 (KALYFGGVYDTWAPGGGDVRKIT), 255 to 275 (KPFAWARRALVWSGEAYLSYS), and 291 to 312 (WFNNTAYPSEFYGPTGPEASQA). Residue Glu367 participates in [CaMn4O5] cluster binding. A helical transmembrane segment spans residues 447–471 (RARAAAAGFEKGIDRDFEPVLSMTP).

The protein belongs to the PsbB/PsbC family. PsbC subfamily. PSII is composed of 1 copy each of membrane proteins PsbA, PsbB, PsbC, PsbD, PsbE, PsbF, PsbH, PsbI, PsbJ, PsbK, PsbL, PsbM, PsbT, PsbX, PsbY, PsbZ, Psb30/Ycf12, at least 3 peripheral proteins of the oxygen-evolving complex and a large number of cofactors. It forms dimeric complexes. Binds multiple chlorophylls and provides some of the ligands for the Ca-4Mn-5O cluster of the oxygen-evolving complex. It may also provide a ligand for a Cl- that is required for oxygen evolution. PSII binds additional chlorophylls, carotenoids and specific lipids. is required as a cofactor.

It is found in the plastid. Its subcellular location is the chloroplast thylakoid membrane. In terms of biological role, one of the components of the core complex of photosystem II (PSII). It binds chlorophyll and helps catalyze the primary light-induced photochemical processes of PSII. PSII is a light-driven water:plastoquinone oxidoreductase, using light energy to abstract electrons from H(2)O, generating O(2) and a proton gradient subsequently used for ATP formation. The polypeptide is Photosystem II CP43 reaction center protein (Populus trichocarpa (Western balsam poplar)).